A 545-amino-acid polypeptide reads, in one-letter code: Cytochrome P450 monooxygenase sdnB (545 aa).

Asn5 carries an N-linked (GlcNAc...) asparagine glycan. Residues 30 to 50 (SILALTPLQGIALFLCLFWGY) traverse the membrane as a helical segment. Asn276 carries N-linked (GlcNAc...) asparagine glycosylation. Residues 322 to 342 (LPILILIILVPAAHTTAMGIS) form a helical membrane-spanning segment. Residues Asn393 and Asn476 are each glycosylated (N-linked (GlcNAc...) asparagine). Position 486 (Cys486) interacts with heme.

The protein belongs to the cytochrome P450 family. The cofactor is heme.

It localises to the membrane. It participates in antibiotic biosynthesis. Cytochrome P450 monooxygenase; part of the gene cluster that mediates the biosynthesis of sordarin and hypoxysordarin, glycoside antibiotics with a unique tetracyclic diterpene aglycone structure. First, the geranylgeranyl diphosphate synthase sdnC constructs GGDP from farnesyl diphosphate and isopentenyl diphosphate. The diterpene cyclase sdnA then catalyzes the cyclization of GGDP to afford cycloaraneosene. Cycloaraneosene is then hydroxylated four times by the putative cytochrome P450 monooxygenases sdnB, sdnE, sdnF and sdnH to give a hydroxylated cycloaraneosene derivative such as cycloaraneosene-8,9,13,19-tetraol. Although the order of the hydroxylations is unclear, at least C8, C9 and C13 of the cycloaraneosene skeleton are hydroxylated before the sordaricin formation. Dehydration of the 13-hydroxy group of the hydroxylated cycloaraneosene derivative might be catalyzed by an unassigned hypothetical protein such as sdnG and sdnP to construct the cyclopentadiene moiety. The FAD-dependent oxidoreductase sdnN is proposed to catalyze the oxidation at C9 of the hydroxylated cycloaraneosene derivative and also catalyze the Baeyer-Villiger oxidation to give the lactone intermediate. The presumed lactone intermediate would be hydrolyzed to give an acrolein moiety and a carboxylate moiety. Then, [4+2]cycloaddition would occur between the acrolein moiety and the cyclopentadiene moiety to give sordaricin. SdnN might also be involved in the [4+2]cycloaddition after the hypothesized oxidation to accommodate the oxidized product and prompt the [4+2]cycloaddition. GDP-6-deoxy-D-altrose may be biosynthesized from GDP-D-mannose by the putative GDP-mannose-4,6-dehydratase sdnI and the short-chain dehydrogenase sdnK. The glycosyltransferase sdnJ catalyzes the attachment of 6-deoxy-D-altrose onto the 19-hydroxy group of sordaricin to give 4'-O-demethylsordarin. The methyltransferase sdnD would complete the biosynthesis of sordarin. Sordarin can be further modified into hypoxysordarin. The unique acyl chain at the 3'-hydroxy group of hypoxysordarin would be constructed by an iterative type I PKS sdnO and the trans-acting polyketide methyltransferase sdnL. SdnL would be responsible for the introduction of an alpha-methyl group of the polyketide chain. Alternatively, the beta-lactamase-like protein sdnR might be responsible for the cleavage and transfer of the polyketide chain from the PKS sdnO to sordarin. Two putative cytochrome P450 monooxygenases, sdnQ and sdnT, might catalyze the epoxidations of the polyketide chain to complete the biosynthesis of hypoxysordarin. Transcriptional regulators sdnM and sdnS are presumably encoded for the transcriptional regulation of the expression of the sdn gene cluster. The protein is Cytochrome P450 monooxygenase sdnB of Sordaria araneosa (Pleurage araneosa).